The chain runs to 144 residues: 3-dehydroquinate dehydratase (144 aa).

Tyr-22 acts as the Proton acceptor in catalysis. Positions 71, 77, and 84 each coordinate substrate. His-97 serves as the catalytic Proton donor. Residues 98 to 99 (IS) and Arg-108 each bind substrate.

It belongs to the type-II 3-dehydroquinase family. In terms of assembly, homododecamer.

The catalysed reaction is 3-dehydroquinate = 3-dehydroshikimate + H2O. Its pathway is metabolic intermediate biosynthesis; chorismate biosynthesis; chorismate from D-erythrose 4-phosphate and phosphoenolpyruvate: step 3/7. Catalyzes a trans-dehydration via an enolate intermediate. This chain is 3-dehydroquinate dehydratase, found in Thermotoga petrophila (strain ATCC BAA-488 / DSM 13995 / JCM 10881 / RKU-1).